Here is a 31-residue protein sequence, read N- to C-terminus: Cytochrome b6-f complex subunit 8 (31 aa).

A helical membrane pass occupies residues 5–25; sequence IVSMAWAALMVVFTFSLSLVI.

This sequence belongs to the PetN family. As to quaternary structure, the 4 large subunits of the cytochrome b6-f complex are cytochrome b6, subunit IV (17 kDa polypeptide, PetD), cytochrome f and the Rieske protein, while the 4 small subunits are PetG, PetL, PetM and PetN. The complex functions as a dimer.

The protein localises to the plastid membrane. In terms of biological role, component of the cytochrome b6-f complex, which mediates electron transfer between photosystem II (PSII) and photosystem I (PSI), cyclic electron flow around PSI, and state transitions. This is Cytochrome b6-f complex subunit 8 from Cuscuta gronovii (Common dodder).